We begin with the raw amino-acid sequence, 1239 residues long: Inner tegument protein (1239 aa).

Disordered stretches follow at residues 1 to 20, 669 to 704, 959 to 980, and 1087 to 1239; these read MASAMESDSGGGSGGADAQP, GESPQAVGLRPLNLEGEGKAGDAGADGAEDEEGGGP, RPPPVFTPAPRRLPQGGADTPP, and GRNA…AEDE. The tract at residues 615–1239 is interaction with large tegument protein; it reads NELPKTRSLA…RPPRPTAEDE (625 aa). Over residues 1112–1123 the composition is skewed to low complexity; that stretch reads DSSPFSFSSSDF. Residues 1139-1148 show a composition bias toward gly residues; that stretch reads VPGGGGGGEG. A compositionally biased stretch (basic and acidic residues) spans 1151–1170; the sequence is EEERERPSDIDTAARARKVE. Low complexity predominate over residues 1180 to 1189; that stretch reads RTTPSPSRRA. The span at 1219 to 1232 shows a compositional bias: basic residues; sequence VRPRTRRGATRRPP.

Belongs to the herpesviridae inner tegument protein family. Interacts (via C-terminus) with the large tegument protein/LTP (via N-terminus).

The protein resides in the virion tegument. It localises to the host cytoplasm. It is found in the host nucleus. Its subcellular location is the host Golgi apparatus. The protein localises to the host trans-Golgi network. Its function is as follows. Plays an essential role in cytoplasmic secondary envelopment during viral egress. Interacts with the capsid via the large tegument protein/LTP and participates in its transport to the host trans-Golgi network (TGN) where secondary envelopment occurs. Modulates tegumentation and capsid accumulation at the viral assembly complex. The protein is Inner tegument protein of Homo sapiens (Human).